The following is a 206-amino-acid chain: Small ribosomal subunit protein uS4 (206 aa).

The S4 RNA-binding domain maps to 96–156 (QRLDNVVYRM…EKAKKQARIV (61 aa)).

It belongs to the universal ribosomal protein uS4 family. As to quaternary structure, part of the 30S ribosomal subunit. Contacts protein S5. The interaction surface between S4 and S5 is involved in control of translational fidelity.

One of the primary rRNA binding proteins, it binds directly to 16S rRNA where it nucleates assembly of the body of the 30S subunit. Its function is as follows. With S5 and S12 plays an important role in translational accuracy. This chain is Small ribosomal subunit protein uS4, found in Alteromonas mediterranea (strain DSM 17117 / CIP 110805 / LMG 28347 / Deep ecotype).